The primary structure comprises 473 residues: Inactive pancreatic lipase-related protein 1 (473 aa).

An N-terminal signal peptide occupies residues 1-17 (MLILWTIPLFLLGAAQG). 2 cysteine pairs are disulfide-bonded: Cys-21–Cys-27 and Cys-109–Cys-120. The Nucleophile role is filled by Ser-171. The Charge relay system role is filled by Asp-194. 4 residues coordinate Ca(2+): Glu-205, Arg-208, Asp-210, and Asp-213. A disulfide bridge links Cys-255 with Cys-279. The active-site Charge relay system is the His-281. Cystine bridges form between Cys-303-Cys-314, Cys-317-Cys-322, and Cys-451-Cys-467. A PLAT domain is found at 356–467 (WRYRVSLTFS…EDILLTLLPC (112 aa)).

It belongs to the AB hydrolase superfamily. Lipase family. In terms of tissue distribution, expressed in female, but not in male, lacrimal gland. Expressed in male and female sublingual gland and pancreas.

Its subcellular location is the secreted. Its function is as follows. May function as inhibitor of dietary triglyceride digestion. Lacks detectable lipase activity (in vitro). The chain is Inactive pancreatic lipase-related protein 1 (Pnliprp1) from Mus musculus (Mouse).